The chain runs to 603 residues: Putative lipase atg15 (603 aa).

Residues 1-20 (MDQPHRRTRKWHLMDLSVST) are Cytoplasmic-facing. The helical; Signal-anchor for type II membrane protein transmembrane segment at 21 to 41 (LLMSLALVLPSCVSAYQPVYF) threads the bilayer. The Lumenal portion of the chain corresponds to 42–603 (RSQEATPFIP…ITPAPILIDL (562 aa)). Residues Asn-166, Asn-201, Asn-223, Asn-281, and Asn-305 are each glycosylated (N-linked (GlcNAc...) asparagine). The active-site Charge relay system is Ser-321. A glycan (N-linked (GlcNAc...) asparagine) is linked at Asn-467.

It belongs to the AB hydrolase superfamily. Lipase family. In terms of assembly, binds to both phosphatidylinositol (PI) and phosphatidylinositol 3,5-bisphosphate (PIP2).

The protein localises to the endosome. It localises to the multivesicular body membrane. It is found in the prevacuolar compartment membrane. The enzyme catalyses a triacylglycerol + H2O = a diacylglycerol + a fatty acid + H(+). Lipase which is essential for lysis of subvacuolar cytoplasm to vacuole targeted bodies and intravacuolar autophagic bodies. Involved in the lysis of intravacuolar multivesicular body (MVB) vesicles. The intravacuolar membrane disintegration by atg15 is critical to life span extension. This is Putative lipase atg15 (atg15) from Emericella nidulans (strain FGSC A4 / ATCC 38163 / CBS 112.46 / NRRL 194 / M139) (Aspergillus nidulans).